The following is a 214-amino-acid chain: Pyridoxine/pyridoxamine 5'-phosphate oxidase (214 aa).

Substrate is bound by residues 11 to 14 (RREY) and lysine 68. Residues 63 to 68 (RLVLLK), 78 to 79 (FT), arginine 84, lysine 85, and glutamine 107 contribute to the FMN site. Positions 125 and 129 each coordinate substrate. FMN contacts are provided by residues 142-143 (QS) and tryptophan 187. Residue 193-195 (RLH) coordinates substrate. Arginine 197 lines the FMN pocket.

The protein belongs to the pyridoxamine 5'-phosphate oxidase family. Homodimer. Requires FMN as cofactor.

It catalyses the reaction pyridoxamine 5'-phosphate + O2 + H2O = pyridoxal 5'-phosphate + H2O2 + NH4(+). The enzyme catalyses pyridoxine 5'-phosphate + O2 = pyridoxal 5'-phosphate + H2O2. It functions in the pathway cofactor metabolism; pyridoxal 5'-phosphate salvage; pyridoxal 5'-phosphate from pyridoxamine 5'-phosphate: step 1/1. It participates in cofactor metabolism; pyridoxal 5'-phosphate salvage; pyridoxal 5'-phosphate from pyridoxine 5'-phosphate: step 1/1. Its function is as follows. Catalyzes the oxidation of either pyridoxine 5'-phosphate (PNP) or pyridoxamine 5'-phosphate (PMP) into pyridoxal 5'-phosphate (PLP). This chain is Pyridoxine/pyridoxamine 5'-phosphate oxidase, found in Blochmanniella floridana.